The chain runs to 492 residues: Ketol-acid reductoisomerase (NADP(+)) (492 aa).

The region spanning 14-208 is the KARI N-terminal Rossmann domain; the sequence is LDQLGRCRFM…GGHKAGVLES (195 aa). NADP(+) is bound by residues 45–48, R68, R76, S78, and 108–110; these read CGAQ and DKQ. The active site involves H132. Residue G158 participates in NADP(+) binding. KARI C-terminal knotted domains are found at residues 209–344 and 345–485; these read SFVA…NAPK and YDGK…MTDM. Mg(2+)-binding residues include D217, E221, E389, and E393. S414 is a substrate binding site.

The protein belongs to the ketol-acid reductoisomerase family. It depends on Mg(2+) as a cofactor.

The enzyme catalyses (2R)-2,3-dihydroxy-3-methylbutanoate + NADP(+) = (2S)-2-acetolactate + NADPH + H(+). It carries out the reaction (2R,3R)-2,3-dihydroxy-3-methylpentanoate + NADP(+) = (S)-2-ethyl-2-hydroxy-3-oxobutanoate + NADPH + H(+). The protein operates within amino-acid biosynthesis; L-isoleucine biosynthesis; L-isoleucine from 2-oxobutanoate: step 2/4. Its pathway is amino-acid biosynthesis; L-valine biosynthesis; L-valine from pyruvate: step 2/4. Functionally, involved in the biosynthesis of branched-chain amino acids (BCAA). Catalyzes an alkyl-migration followed by a ketol-acid reduction of (S)-2-acetolactate (S2AL) to yield (R)-2,3-dihydroxy-isovalerate. In the isomerase reaction, S2AL is rearranged via a Mg-dependent methyl migration to produce 3-hydroxy-3-methyl-2-ketobutyrate (HMKB). In the reductase reaction, this 2-ketoacid undergoes a metal-dependent reduction by NADPH to yield (R)-2,3-dihydroxy-isovalerate. This Haemophilus influenzae (strain PittGG) protein is Ketol-acid reductoisomerase (NADP(+)).